We begin with the raw amino-acid sequence, 320 residues long: 1-aminocyclopropane-1-carboxylate oxidase (320 aa).

The region spanning 154 to 254 is the Fe2OG dioxygenase domain; the sequence is PTFGTKVSNY…RMSLASFYNP (101 aa). Residues His-178, Asp-180, and His-235 each contribute to the Fe cation site.

This sequence belongs to the iron/ascorbate-dependent oxidoreductase family. Fe cation is required as a cofactor.

It catalyses the reaction 1-aminocyclopropane-1-carboxylate + L-ascorbate + O2 = ethene + L-dehydroascorbate + hydrogen cyanide + CO2 + 2 H2O. It functions in the pathway alkene biosynthesis; ethylene biosynthesis via S-adenosyl-L-methionine; ethylene from S-adenosyl-L-methionine: step 2/2. This chain is 1-aminocyclopropane-1-carboxylate oxidase (ACO), found in Persea americana (Avocado).